A 965-amino-acid polypeptide reads, in one-letter code: Calsyntenin-2 (965 aa).

The signal sequence occupies residues 1-20 (MLPGRLCLVPLLLALGVGSG). Residues 21-835 (GGSGDGGDSR…SIQRSSVVPS (815 aa)) lie on the Extracellular side of the membrane. 2 Cadherin domains span residues 46 to 162 (IETS…APTF) and 163 to 282 (KEPA…MPLF). 2 N-linked (GlcNAc...) asparagine glycosylation sites follow: N58 and N100. N344, N376, N720, and N733 each carry an N-linked (GlcNAc...) asparagine glycan. The chain crosses the membrane as a helical span at residues 836–856 (IATVVIIISVCMLVFVVAMGV). At 857 to 965 (YRVRIAHQHF…NTAGVINIWK (109 aa)) the chain is on the cytoplasmic side. Positions 891-965 (PMEKHEGPGH…NTAGVINIWK (75 aa)) are disordered. The span at 892–902 (MEKHEGPGHGE) shows a compositional bias: basic and acidic residues. Residues 903–915 (DETEGEEEEEAEE) are compositionally biased toward acidic residues. Polar residues predominate over residues 942 to 959 (QSGTSSQRPERSTWNTAG).

It belongs to the calsyntenin family. Post-translationally, proteolytically processed under normal cellular conditions. A primary zeta-cleavage generates a large extracellular (soluble) N-terminal domain (sAlc) and a short C-terminal transmembrane fragment (CTF1). A secondary cleavage catalyzed by gamma-secretase within the transmembrane domain releases the beta-Alc-gamma chain in the extracellular milieu and produces an intracellular fragment (AlcICD). This processing is strongly suppressed in the tripartite complex formed with APBA2 and APP, which seems to prevent the association with PSEN1.

The protein resides in the postsynaptic cell membrane. The protein localises to the endoplasmic reticulum membrane. It is found in the golgi apparatus membrane. Its subcellular location is the cell projection. It localises to the dendrite. Postsynaptic adhesion molecule that binds to presynaptic neurexins to mediate synapse formation, and which is involved in learning and memory. Promotes synapse development by acting as a cell adhesion molecule at the postsynaptic membrane, which associates with neurexin-alpha at the presynaptic membrane. The sequence is that of Calsyntenin-2 from Rattus norvegicus (Rat).